The following is a 144-amino-acid chain: Putative pre-16S rRNA nuclease (144 aa).

This sequence belongs to the YqgF nuclease family.

The protein resides in the cytoplasm. Its function is as follows. Could be a nuclease involved in processing of the 5'-end of pre-16S rRNA. The polypeptide is Putative pre-16S rRNA nuclease (Symbiobacterium thermophilum (strain DSM 24528 / JCM 14929 / IAM 14863 / T)).